A 534-amino-acid polypeptide reads, in one-letter code: Inorganic phosphate transporter 1-6 (534 aa).

The Cytoplasmic portion of the chain corresponds to 1 to 29 (MGGGGGEQQQLEVLHALDVAKTQWYHFTA). The chain crosses the membrane as a helical span at residues 30–50 (IVVAGMGFFTDAYDLFCISLV). Over 51-75 (TKLLGRIYYRVDGSPSPGTLPPHVS) the chain is Extracellular. Residues 76 to 96 (ASVNGVAFVGTLSGQLFFGWL) traverse the membrane as a helical segment. Residues 97-104 (GDKLGRKR) are Cytoplasmic-facing. Residues 105 to 125 (VYGITLMLMVLCSLASALSFG) traverse the membrane as a helical segment. The Extracellular segment spans residues 126–127 (HT). Residues 128–148 (PTSVMATLCFFRFWLGFGIGG) traverse the membrane as a helical segment. Topologically, residues 149–168 (DYPLSATIMSEYANKKTRGA) are cytoplasmic. Residues 169-189 (FIAAVFAMQGFGIITGGLVAI) traverse the membrane as a helical segment. Residues 190–216 (LVSASFRAAFPAPPYGEDPVASTPPQA) are Extracellular-facing. A helical membrane pass occupies residues 217–237 (DFVWRIILMLGALPAALTYYW). The Cytoplasmic portion of the chain corresponds to 238–294 (RTKMPETARYTALVANNAKQAAADMSKVLQVVEMRNIGNNGGSRRPFGLFSGEFVRR). A helical membrane pass occupies residues 295 to 315 (HGLHLVGTSATWLLLDIAFYS). The Extracellular segment spans residues 316 to 350 (QNLFQKDIFSAVGWIPKAATMSALEELFRIARAQT). A helical membrane pass occupies residues 351–371 (LIALCGTVPGYWFTVALIDVV). Topologically, residues 372–375 (GRFK) are cytoplasmic. A helical transmembrane segment spans residues 376–396 (IQAVGFFMMTLFMLTLALPYH). Residues 397-405 (HWTAPGKNH) are Extracellular-facing. The chain crosses the membrane as a helical span at residues 406–426 (VGFLLLYGLTFFFANFGPNST). Residues 427-445 (TFIVPAEIFPARLRATCHG) are Cytoplasmic-facing. The chain crosses the membrane as a helical span at residues 446–466 (ISAASGKLGAIVGSFGFLYLA). Residues 467–486 (QSPDRSKTEHGYPPGIGVRN) are Extracellular-facing. Residues 487–507 (SLFLLAACNLLGLLFTFLVPE) form a helical membrane-spanning segment. Over 508-534 (SKGKSLEEMSGDAEAQEEAPPPLQTVL) the chain is Cytoplasmic. The segment at 514–534 (EEMSGDAEAQEEAPPPLQTVL) is disordered.

Belongs to the major facilitator superfamily. Phosphate:H(+) symporter (TC 2.A.1.9) family. In terms of tissue distribution, highly expressed in leaves and at low levels in roots. Expressed in leaf xylem parenchyma cells.

It localises to the membrane. High-affinity transporter for external inorganic phosphate (Pi). Probably involved in Pi uptake, translocation and internal transport throughout the plant. This chain is Inorganic phosphate transporter 1-6 (PHT1-6), found in Oryza sativa subsp. japonica (Rice).